A 385-amino-acid chain; its full sequence is Zinc finger protein B385R (385 aa).

2 C2H2-type zinc fingers span residues 166–190 (LQCP…FYNH) and 168–190 (CPNC…FYNH).

The protein belongs to the asfivirus B385R family.

The sequence is that of Zinc finger protein B385R from African swine fever virus (isolate Tick/Malawi/Lil 20-1/1983) (ASFV).